Consider the following 254-residue polypeptide: Large ribosomal subunit protein uL4 (254 aa).

The disordered stretch occupies residues 45 to 70 (PWGNDPEAGKRTSAKGWGSGRGTARV).

Belongs to the universal ribosomal protein uL4 family. Part of the 50S ribosomal subunit.

Functionally, one of the primary rRNA binding proteins, this protein initially binds near the 5'-end of the 23S rRNA. It is important during the early stages of 50S assembly. It makes multiple contacts with different domains of the 23S rRNA in the assembled 50S subunit and ribosome. Its function is as follows. Forms part of the polypeptide exit tunnel. The protein is Large ribosomal subunit protein uL4 of Methanobrevibacter smithii (strain ATCC 35061 / DSM 861 / OCM 144 / PS).